Reading from the N-terminus, the 267-residue chain is Elsinochrome reductase 1 (267 aa).

Positions 26, 72, 99, and 132 each coordinate NADP(+). Catalysis depends on Ser-149, which acts as the Proton donor. NADP(+)-binding residues include Tyr-163, Lys-167, Ile-196, and Thr-198. Tyr-163 serves as the catalytic Proton acceptor. Lys-167 serves as the catalytic Lowers pKa of active site Tyr.

Belongs to the short-chain dehydrogenases/reductases (SDR) family.

Functionally, reductase; part of the gene cluster that mediates the biosynthesis of elsinochromes, pigments consisting of at least four interconvertible tautomers (A, B, C and D) that have a core phenolic quinone to which various side chains are attached and which play an important role in fungal pathogenesis. The non-reducing polyketide synthase PKS1 was proposed to iteratively catalyze decarboxylation between acetyl-CoA and malonyl-CoA subunits for polyketide chain elongation. The released polyketide undergoes cyclization to form an aromatic ring, and proceeds via serial modification steps to produce the heptaketide back- bone of elsinochrome. As elsinochrome has a symmetrical structure, two identical heptaketides are fused to form a core 1,2-dihydrobenzo-perylene ring structure, which can then be successively modified to produce the various derivatives of elsinochrome. Some of these reactions may be cooperatively carried out, at least in part, by the products of RDT1, OXR1 and PKS1. PRF1, embedded within the elsinochrome cluster possibly functions to stabilize some of the biosynthetic enzymes required for elsinochrome production. As prefoldin is a hexamer containing 2 a and 4 b subunits, additional prefoldin subunits, whose coding genes may not immediately link to the elsinochrome biosynthetic gene cluster, are required to fulfill the chaperone function. In addition, no methyltransferase-coding gene exists within the biosynthetic gene cluster, even though elsinochrome has four methyl groups at positions C3, C7, C8 and C12. Apparently, the identified gene cluster does not contain the entire entourage of genes responsible for elsinochrome biosynthesis. Once elsinochrome is synthesized, it must be exported outside the fungal cells, which is probably accomplished by the ECT1 transporter, to avoid toxicity. The chain is Elsinochrome reductase 1 from Elsinoe fawcettii (Citrus scab fungus).